Reading from the N-terminus, the 156-residue chain is Small ribosomal subunit protein uS7 (156 aa).

The protein belongs to the universal ribosomal protein uS7 family. In terms of assembly, part of the 30S ribosomal subunit. Contacts proteins S9 and S11.

Its function is as follows. One of the primary rRNA binding proteins, it binds directly to 16S rRNA where it nucleates assembly of the head domain of the 30S subunit. Is located at the subunit interface close to the decoding center, probably blocks exit of the E-site tRNA. This chain is Small ribosomal subunit protein uS7, found in Thiobacillus denitrificans (strain ATCC 25259 / T1).